Here is a 327-residue protein sequence, read N- to C-terminus: Pyruvate dehydrogenase E1 component subunit beta (327 aa).

A thiamine diphosphate-binding site is contributed by E60.

As to quaternary structure, heterodimer of an alpha and a beta chain. Thiamine diphosphate serves as cofactor.

It catalyses the reaction N(6)-[(R)-lipoyl]-L-lysyl-[protein] + pyruvate + H(+) = N(6)-[(R)-S(8)-acetyldihydrolipoyl]-L-lysyl-[protein] + CO2. In terms of biological role, the pyruvate dehydrogenase complex catalyzes the overall conversion of pyruvate to acetyl-CoA and CO(2). It contains multiple copies of three enzymatic components: pyruvate dehydrogenase (E1), dihydrolipoamide acetyltransferase (E2) and lipoamide dehydrogenase (E3). In Acholeplasma laidlawii, this protein is Pyruvate dehydrogenase E1 component subunit beta (pdhB).